Here is a 516-residue protein sequence, read N- to C-terminus: Exoglucanase 1 (516 aa).

The signal sequence occupies residues 1-17 (MRASLLAFSLAAAVAGG). A catalytic region spans residues 18-445 (QQAGTLTAKR…GHLGISPFSG (428 aa)). A glycan (N-linked (GlcNAc...) asparagine) is linked at Asn45. Catalysis depends on Glu223, which acts as the Nucleophile. The active-site Proton donor is Glu228. A glycan (N-linked (GlcNAc...) asparagine) is linked at Asn281. The tract at residues 444-481 (SGGSSGTPPSNPSSSASPTSSTAKPSSTSTASNPSGTG) is disordered. The linker stretch occupies residues 446–480 (GSSGTPPSNPSSSASPTSSTAKPSSTSTASNPSGT). The span at 449–481 (GTPPSNPSSSASPTSSTAKPSSTSTASNPSGTG) shows a compositional bias: low complexity. The CBM1 domain occupies 480–516 (TGAAHWAQCGGIGFSGPTTCPEPYTCAKDHDIYSQCV). Intrachain disulfides connect Cys488/Cys505 and Cys499/Cys515.

Belongs to the glycosyl hydrolase 7 (cellulase C) family.

The protein resides in the secreted. It carries out the reaction Hydrolysis of (1-&gt;4)-beta-D-glucosidic linkages in cellulose and cellotetraose, releasing cellobiose from the non-reducing ends of the chains.. This chain is Exoglucanase 1 (cbh-1), found in Neurospora crassa (strain ATCC 24698 / 74-OR23-1A / CBS 708.71 / DSM 1257 / FGSC 987).